The sequence spans 85 residues: Large ribosomal subunit protein bL27 (85 aa).

The disordered stretch occupies residues 1 to 22 (MAKTKAGGSTRNGRDSKGRRLG).

This sequence belongs to the bacterial ribosomal protein bL27 family.

In Mycoplasmopsis pulmonis (strain UAB CTIP) (Mycoplasma pulmonis), this protein is Large ribosomal subunit protein bL27.